A 346-amino-acid chain; its full sequence is Biotin synthase (346 aa).

The Radical SAM core domain maps to Arg-38–Thr-256. [4Fe-4S] cluster contacts are provided by Cys-53, Cys-57, and Cys-60. Residues Cys-97, Cys-128, Cys-188, and Arg-260 each coordinate [2Fe-2S] cluster.

It belongs to the radical SAM superfamily. Biotin synthase family. As to quaternary structure, homodimer. It depends on [4Fe-4S] cluster as a cofactor. [2Fe-2S] cluster is required as a cofactor.

It carries out the reaction (4R,5S)-dethiobiotin + (sulfur carrier)-SH + 2 reduced [2Fe-2S]-[ferredoxin] + 2 S-adenosyl-L-methionine = (sulfur carrier)-H + biotin + 2 5'-deoxyadenosine + 2 L-methionine + 2 oxidized [2Fe-2S]-[ferredoxin]. It functions in the pathway cofactor biosynthesis; biotin biosynthesis; biotin from 7,8-diaminononanoate: step 2/2. Functionally, catalyzes the conversion of dethiobiotin (DTB) to biotin by the insertion of a sulfur atom into dethiobiotin via a radical-based mechanism. This chain is Biotin synthase, found in Escherichia coli O6:K15:H31 (strain 536 / UPEC).